Consider the following 572-residue polypeptide: Proline--tRNA ligase (572 aa).

Belongs to the class-II aminoacyl-tRNA synthetase family. ProS type 1 subfamily. In terms of assembly, homodimer.

The protein localises to the cytoplasm. The enzyme catalyses tRNA(Pro) + L-proline + ATP = L-prolyl-tRNA(Pro) + AMP + diphosphate. Its function is as follows. Catalyzes the attachment of proline to tRNA(Pro) in a two-step reaction: proline is first activated by ATP to form Pro-AMP and then transferred to the acceptor end of tRNA(Pro). As ProRS can inadvertently accommodate and process non-cognate amino acids such as alanine and cysteine, to avoid such errors it has two additional distinct editing activities against alanine. One activity is designated as 'pretransfer' editing and involves the tRNA(Pro)-independent hydrolysis of activated Ala-AMP. The other activity is designated 'posttransfer' editing and involves deacylation of mischarged Ala-tRNA(Pro). The misacylated Cys-tRNA(Pro) is not edited by ProRS. This Escherichia coli O157:H7 protein is Proline--tRNA ligase.